The following is a 618-amino-acid chain: Nuclear RNA export factor 1 (618 aa).

Positions 1–15 are enriched in basic and acidic residues; it reads MADEGKSYNEHDDRV. Positions 1 to 113 are disordered; that stretch reads MADEGKSYNE…RGGAGTSQDG (113 aa). The residue at position 2 (Ala2) is an N-acetylalanine. The interval 2–59 is minor non-specific RNA-binding; the sequence is ADEGKSYNEHDDRVSFPQRRKKGRGPFRWKCGEGNRRSGRGGSGVQSSRFEEDDGDVA. The tract at residues 2 to 117 is RNA-binding (RBD); the sequence is ADEGKSYNEH…GTSQDGTTKN (116 aa). The tract at residues 2 to 197 is interaction with ALYREF/THOC4 and LUZP4; sequence ADEGKSYNEH…IIINASAPPY (196 aa). Residues 19-28 show a composition bias toward basic residues; that stretch reads QRRKKGRGPF. The residue at position 41 (Arg41) is an Asymmetric dimethylarginine; alternate. Residue Arg41 is modified to Omega-N-methylarginine; alternate. The major non-specific RNA-binding stretch occupies residues 60 to 117; that stretch reads MNDPQDGPRVRYNPYTNRPNRRGDGWHDRDRIHITVRRDRAPAERGGAGTSQDGTTKN. Residues 60 to 117 form an RNA binding region; it reads MNDPQDGPRVRYNPYTNRPNRRGDGWHDRDRIHITVRRDRAPAERGGAGTSQDGTTKN. The Nuclear localization signal motif lies at 66 to 99; the sequence is GPRVRYNPYTNRPNRRGDGWHDRDRIHITVRRDR. Over residues 80-102 the composition is skewed to basic and acidic residues; sequence RRGDGWHDRDRIHITVRRDRAPA. The Nuclear export signal signature appears at 82–109; that stretch reads GDGWHDRDRIHITVRRDRAPAERGGAGT. Residues 118-197 enclose the RRM domain; the sequence is WFKITIPYGR…IIINASAPPY (80 aa). Residue Tyr125 is modified to 3'-nitrotyrosine. LRR repeat units lie at residues 265-290, 291-314, 315-342, and 343-370; these read ELLS…QKAP, NLKT…IKGL, KLEE…AIRE, and RFPK…TMLP. In terms of domain architecture, NTF2 spans 385–535; it reads LVLRFLQQYY…LCIVNDELFV (151 aa). The TAP-C domain occupies 564 to 618; that stretch reads PEQQEMLQAFSTQSGMNLEWSQKCLQDNNWDYTRSAQAFTLLKAKGEIPEVAFMK.

This sequence belongs to the NXF family. Heterodimer (via NTF2 domain) with NXT1. The formation of NXF1-NXT1 heterodimers is required for the NXF1-mediated nuclear mRNA export. Forms a complex with RANBP2/NUP358, NXT1 and RANGAP1. Associates with the exon junction complex (EJC). Associates with the transcription/export (TREX) complex. Found in a mRNA complex with UPF3A and UPF3B. Found in a post-splicing complex with RBM8A, UPF1, UPF2, UPF3A, UPF3B and RNPS1. Interacts (via N-terminus) with DHX9 (via N-terminus); this interaction is direct and negatively regulates NXF1-mediated nuclear export of constitutive transport element (CTE)-containing cellular mRNAs. Interacts with FYTTD1/UIF. Interacts with EIF4A3. Interacts with NUP42. Interacts with ALYREF/THOC4. Interacts with CHTOP. Interacts with FRG1 (via N-terminus). Interacts with LUZP4. Interacts with FMR1; the interaction occurs in a mRNA-dependent and polyribosomes-independent manner in the nucleus. Interacts with CPSF6 (via N-terminus); this interaction is direct. Interacts with RBM15. Interacts with RBM15B. Interacts with MCM3AP; this interaction is not mediated by RNA. Interacts with DDX3X (via C-terminus); this interaction may be partly involved in DDX3X nuclear export and in NXF1 localization to stress granules. Interacts with PABPC1/PABP1. In terms of tissue distribution, expressed ubiquitously.

The protein localises to the nucleus. The protein resides in the nucleoplasm. It is found in the nucleus speckle. Its subcellular location is the cytoplasm. It localises to the nuclear pore complex. The protein localises to the nucleus envelope. The protein resides in the stress granule. Functionally, involved in the nuclear export of mRNA species bearing retroviral constitutive transport elements (CTE) and in the export of mRNA from the nucleus to the cytoplasm (TAP/NFX1 pathway). The NXF1-NXT1 heterodimer is involved in the export of HSP70 mRNA in conjunction with ALYREF/THOC4 and THOC5 components of the TREX complex. ALYREF/THOC4-bound mRNA is thought to be transferred to the NXF1-NXT1 heterodimer for export. Also involved in nuclear export of m6A-containing mRNAs: interaction between SRSF3 and YTHDC1 facilitates m6A-containing mRNA-binding to both SRSF3 and NXF1, promoting mRNA nuclear export. The protein is Nuclear RNA export factor 1 (Nxf1) of Mus musculus (Mouse).